Reading from the N-terminus, the 288-residue chain is Stomatin (288 aa).

The disordered stretch occupies residues 1–22; that stretch reads MAEKRHTRDSEAQRLPDSFKDS. At 1–25 the chain is on the cytoplasmic side; that stretch reads MAEKRHTRDSEAQRLPDSFKDSPSK. Residue Ser-10 is modified to Phosphoserine; by PKA. Ser-18 is modified (phosphoserine). The stretch at 26–54 is an intramembrane region; it reads GLGPCGWILVAFSFLFTVITFPISIWMCI. A lipid anchor (S-palmitoyl cysteine) is attached at Cys-30. Topologically, residues 55 to 288 are cytoplasmic; that stretch reads KIIKEYERAI…IIGAKHSHLG (234 aa). Cys-87 is lipidated: S-palmitoyl cysteine; partial. Ser-161 and Ser-244 each carry phosphoserine. The tract at residues 265–273 is required for homooligomerization; the sequence is STIVFPLPI. A required for lipid raft association region spans residues 267 to 269; the sequence is IVF. The tract at residues 273-287 is interaction with LANCL1; sequence IDMLQGIIGAKHSHL.

This sequence belongs to the band 7/mec-2 family. Homodimer and higher order homooligomer. The homodimer is banana-shaped. Interacts with ASIC1, ASIC2 and ASIC3. Interacts with LANCL1. Interacts with SLC2A1. Interacts with SLC4A1; this interaction positively regulates SLC4A1 activity. Identified in large complexes with SLC40A1, SLC14A1, SLC29A1 and AQP1. Interacts with STOML1; may redistribute STOM from the plasma membrane to late endosomes. Detected in erythrocytes (at protein level). Widely expressed.

The protein resides in the cell membrane. Its subcellular location is the cytoplasm. It is found in the cytoskeleton. It localises to the membrane raft. The protein localises to the melanosome. The protein resides in the cytoplasmic vesicle. Its function is as follows. Regulates ion channel activity and transmembrane ion transport. Regulates ASIC2 and ASIC3 channel activity. This chain is Stomatin, found in Homo sapiens (Human).